Here is a 181-residue protein sequence, read N- to C-terminus: ATP synthase subunit delta (181 aa).

The protein belongs to the ATPase delta chain family. F-type ATPases have 2 components, F(1) - the catalytic core - and F(0) - the membrane proton channel. F(1) has five subunits: alpha(3), beta(3), gamma(1), delta(1), epsilon(1). F(0) has three main subunits: a(1), b(2) and c(10-14). The alpha and beta chains form an alternating ring which encloses part of the gamma chain. F(1) is attached to F(0) by a central stalk formed by the gamma and epsilon chains, while a peripheral stalk is formed by the delta and b chains.

The protein localises to the cell membrane. F(1)F(0) ATP synthase produces ATP from ADP in the presence of a proton or sodium gradient. F-type ATPases consist of two structural domains, F(1) containing the extramembraneous catalytic core and F(0) containing the membrane proton channel, linked together by a central stalk and a peripheral stalk. During catalysis, ATP synthesis in the catalytic domain of F(1) is coupled via a rotary mechanism of the central stalk subunits to proton translocation. In terms of biological role, this protein is part of the stalk that links CF(0) to CF(1). It either transmits conformational changes from CF(0) to CF(1) or is implicated in proton conduction. This chain is ATP synthase subunit delta, found in Lactiplantibacillus plantarum (strain ATCC BAA-793 / NCIMB 8826 / WCFS1) (Lactobacillus plantarum).